A 606-amino-acid chain; its full sequence is Probable potassium transport system protein Kup 2 (606 aa).

Helical transmembrane passes span 18–38 (GLVF…IMTL), 46–66 (VLGI…VEYA), 97–117 (VAFV…DGII), 140–160 (AQGV…IFQF), 169–189 (AFGP…IVSI), 204–224 (AVTF…EVIL), 247–267 (AWYF…AFIL), 286–306 (ILYI…SQAL), 339–359 (IYIG…MLIF), 368–388 (AYGL…TMIF), 395–415 (WKVP…TANF), and 418–438 (LPHG…IMII).

Belongs to the HAK/KUP transporter (TC 2.A.72) family.

Its subcellular location is the cell inner membrane. It carries out the reaction K(+)(in) + H(+)(in) = K(+)(out) + H(+)(out). Functionally, transport of potassium into the cell. Likely operates as a K(+):H(+) symporter. In Geobacter metallireducens (strain ATCC 53774 / DSM 7210 / GS-15), this protein is Probable potassium transport system protein Kup 2.